Here is a 165-residue protein sequence, read N- to C-terminus: MKPRYRLAVERDAEQLLELTLRAYEPIRKLGIRFAAAHADLDLVLKNIRENACYVMEEDGRIIATITLRMPWGKQPGPYGVPHIWWFAVDPDTGKKGIGTKLLQWLEETILRDTLKVPFVSLGTADKHPWLIEMYERKGYVRSGEQDLGKGHITVYMKKQLRHDL.

An N-acetyltransferase domain is found at 3 to 162 (PRYRLAVERD…ITVYMKKQLR (160 aa)).

This sequence belongs to the acetyltransferase family.

The catalysed reaction is S-(2-succino)-L-cysteine + acetyl-CoA = N-acetyl-S-(2-succino)-L-cysteine + CoA + H(+). The protein operates within amino-acid biosynthesis; L-cysteine biosynthesis. In terms of biological role, catalyzes the N-acetylation of S-(2-succino)cysteine. Is involved in a S-(2-succino)cysteine (2SC) degradation pathway that allows B.subtilis to grow on 2SC as a sole sulfur source, via its metabolization to cysteine. Moreover, 2SC is a toxic compound in B.subtilis at high exogenous concentrations, and this enzyme relieves 2SC toxicity via N-acetylation. This is S-(2-succino)cysteine N-acetyltransferase from Bacillus subtilis (strain 168).